The following is a 926-amino-acid chain: Protein translocase subunit SecA (926 aa).

ATP contacts are provided by residues Gln87, 105–109, and Asp512; that span reads GEGKT. Cys911, Cys913, Cys922, and His923 together coordinate Zn(2+).

The protein belongs to the SecA family. Monomer and homodimer. Part of the essential Sec protein translocation apparatus which comprises SecA, SecYEG and auxiliary proteins SecDF-YajC and YidC. Zn(2+) serves as cofactor.

It is found in the cell inner membrane. It localises to the cytoplasm. The enzyme catalyses ATP + H2O + cellular proteinSide 1 = ADP + phosphate + cellular proteinSide 2.. In terms of biological role, part of the Sec protein translocase complex. Interacts with the SecYEG preprotein conducting channel. Has a central role in coupling the hydrolysis of ATP to the transfer of proteins into and across the cell membrane, serving both as a receptor for the preprotein-SecB complex and as an ATP-driven molecular motor driving the stepwise translocation of polypeptide chains across the membrane. This is Protein translocase subunit SecA from Psychrobacter cryohalolentis (strain ATCC BAA-1226 / DSM 17306 / VKM B-2378 / K5).